A 288-amino-acid polypeptide reads, in one-letter code: Ribosomal RNA small subunit methyltransferase A (288 aa).

Residues N18, L20, G45, E66, D91, and N118 each coordinate S-adenosyl-L-methionine.

The protein belongs to the class I-like SAM-binding methyltransferase superfamily. rRNA adenine N(6)-methyltransferase family. RsmA subfamily.

It localises to the cytoplasm. The enzyme catalyses adenosine(1518)/adenosine(1519) in 16S rRNA + 4 S-adenosyl-L-methionine = N(6)-dimethyladenosine(1518)/N(6)-dimethyladenosine(1519) in 16S rRNA + 4 S-adenosyl-L-homocysteine + 4 H(+). In terms of biological role, specifically dimethylates two adjacent adenosines (A1518 and A1519) in the loop of a conserved hairpin near the 3'-end of 16S rRNA in the 30S particle. May play a critical role in biogenesis of 30S subunits. The chain is Ribosomal RNA small subunit methyltransferase A from Mannheimia succiniciproducens (strain KCTC 0769BP / MBEL55E).